The sequence spans 161 residues: Nucleotide-binding protein Glov_3198 (161 aa).

This sequence belongs to the YajQ family.

Functionally, nucleotide-binding protein. This Trichlorobacter lovleyi (strain ATCC BAA-1151 / DSM 17278 / SZ) (Geobacter lovleyi) protein is Nucleotide-binding protein Glov_3198.